A 431-amino-acid polypeptide reads, in one-letter code: Enolase (431 aa).

Position 166 (Q166) interacts with (2R)-2-phosphoglycerate. Residue E208 is the Proton donor of the active site. The Mg(2+) site is built by D245, E288, and D315. 4 residues coordinate (2R)-2-phosphoglycerate: K340, R369, S370, and K391. The active-site Proton acceptor is the K340.

It belongs to the enolase family. It depends on Mg(2+) as a cofactor.

The protein resides in the cytoplasm. It is found in the secreted. Its subcellular location is the cell surface. The enzyme catalyses (2R)-2-phosphoglycerate = phosphoenolpyruvate + H2O. It participates in carbohydrate degradation; glycolysis; pyruvate from D-glyceraldehyde 3-phosphate: step 4/5. Its function is as follows. Catalyzes the reversible conversion of 2-phosphoglycerate (2-PG) into phosphoenolpyruvate (PEP). It is essential for the degradation of carbohydrates via glycolysis. The chain is Enolase from Clostridium botulinum (strain ATCC 19397 / Type A).